Consider the following 142-residue polypeptide: Hemoglobin subunit alpha (142 aa).

Position 1 is an N-acetylserine (serine 1). One can recognise a Globin domain in the interval 1–142 (SLSDKDKAVV…LALALSEKYR (142 aa)). Histidine 59 is a binding site for O2. Histidine 88 lines the heme b pocket.

Belongs to the globin family. As to quaternary structure, heterotetramer of two alpha chains and two beta chains. In terms of tissue distribution, red blood cells.

Involved in oxygen transport from gills to the various peripheral tissues. The polypeptide is Hemoglobin subunit alpha (hba) (Carassius auratus (Goldfish)).